A 140-amino-acid polypeptide reads, in one-letter code: Transmembrane protein 107 (140 aa).

The next 2 membrane-spanning stretches (helical) occupy residues 7 to 27 (LVPSRFLTLLAHLVIVITLFW) and 53 to 73 (LVAALCLTLGLFAVELAGFLS). Residue Asn-79 is glycosylated (N-linked (GlcNAc...) asparagine). 2 helical membrane passes run 83–103 (SLLSIAAHCSASVALSFFIFE) and 113–133 (IFAFCSAFPAVTETALFIAVF).

As to quaternary structure, part of the tectonic-like complex (also named B9 complex). Interacts with TMEM237, TMEM231, MKS1 and TMEM216.

The protein localises to the membrane. It is found in the cell projection. The protein resides in the cilium. Its function is as follows. Plays a role in cilia formation and embryonic patterning. Requires for normal Sonic hedgehog (Shh) signaling in the neural tube and acts in combination with GLI2 and GLI3 to pattern ventral and intermediate neuronal cell types. During ciliogenesis regulates the ciliary transition zone localization of some MKS complex proteins. The sequence is that of Transmembrane protein 107 from Rattus norvegicus (Rat).